Reading from the N-terminus, the 375-residue chain is Tyrosine--tRNA ligase (375 aa).

5 residues coordinate L-tyrosine: Tyr37, Tyr168, Gln172, Asp175, and Gln190. A 'KMSKS' region motif is present at residues 251–255 (KMSKS). Residue Lys254 participates in ATP binding.

This sequence belongs to the class-I aminoacyl-tRNA synthetase family. TyrS type 4 subfamily. Homodimer.

The protein localises to the cytoplasm. It catalyses the reaction tRNA(Tyr) + L-tyrosine + ATP = L-tyrosyl-tRNA(Tyr) + AMP + diphosphate + H(+). In terms of biological role, catalyzes the attachment of tyrosine to tRNA(Tyr) in a two-step reaction: tyrosine is first activated by ATP to form Tyr-AMP and then transferred to the acceptor end of tRNA(Tyr). This is Tyrosine--tRNA ligase from Thermococcus gammatolerans (strain DSM 15229 / JCM 11827 / EJ3).